The primary structure comprises 332 residues: Anthranilate phosphoribosyltransferase (332 aa).

5-phospho-alpha-D-ribose 1-diphosphate-binding positions include Gly-79, 82–83 (GD), Ser-87, 89–92 (NIST), 107–115 (KHGNRSVSS), and Ser-119. Residue Gly-79 participates in anthranilate binding. Ser-91 contacts Mg(2+). An anthranilate-binding site is contributed by Asn-110. Arg-165 provides a ligand contact to anthranilate. Positions 223 and 224 each coordinate Mg(2+).

This sequence belongs to the anthranilate phosphoribosyltransferase family. In terms of assembly, homodimer. Mg(2+) serves as cofactor.

It carries out the reaction N-(5-phospho-beta-D-ribosyl)anthranilate + diphosphate = 5-phospho-alpha-D-ribose 1-diphosphate + anthranilate. The protein operates within amino-acid biosynthesis; L-tryptophan biosynthesis; L-tryptophan from chorismate: step 2/5. In terms of biological role, catalyzes the transfer of the phosphoribosyl group of 5-phosphorylribose-1-pyrophosphate (PRPP) to anthranilate to yield N-(5'-phosphoribosyl)-anthranilate (PRA). The polypeptide is Anthranilate phosphoribosyltransferase (Photorhabdus laumondii subsp. laumondii (strain DSM 15139 / CIP 105565 / TT01) (Photorhabdus luminescens subsp. laumondii)).